Consider the following 181-residue polypeptide: Crossover junction endodeoxyribonuclease RuvC (181 aa).

Active-site residues include Asp-7, Glu-67, and Asp-139. Residues Asp-7, Glu-67, and Asp-139 each coordinate Mg(2+).

Belongs to the RuvC family. As to quaternary structure, homodimer which binds Holliday junction (HJ) DNA. The HJ becomes 2-fold symmetrical on binding to RuvC with unstacked arms; it has a different conformation from HJ DNA in complex with RuvA. In the full resolvosome a probable DNA-RuvA(4)-RuvB(12)-RuvC(2) complex forms which resolves the HJ. Mg(2+) is required as a cofactor.

The protein localises to the cytoplasm. The catalysed reaction is Endonucleolytic cleavage at a junction such as a reciprocal single-stranded crossover between two homologous DNA duplexes (Holliday junction).. In terms of biological role, the RuvA-RuvB-RuvC complex processes Holliday junction (HJ) DNA during genetic recombination and DNA repair. Endonuclease that resolves HJ intermediates. Cleaves cruciform DNA by making single-stranded nicks across the HJ at symmetrical positions within the homologous arms, yielding a 5'-phosphate and a 3'-hydroxyl group; requires a central core of homology in the junction. The consensus cleavage sequence is 5'-(A/T)TT(C/G)-3'. Cleavage occurs on the 3'-side of the TT dinucleotide at the point of strand exchange. HJ branch migration catalyzed by RuvA-RuvB allows RuvC to scan DNA until it finds its consensus sequence, where it cleaves and resolves the cruciform DNA. The polypeptide is Crossover junction endodeoxyribonuclease RuvC (Ralstonia pickettii (strain 12J)).